The primary structure comprises 218 residues: uncharacterized protein (218 aa).

This is an uncharacterized protein from Ureaplasma parvum serovar 3 (strain ATCC 700970).